A 955-amino-acid polypeptide reads, in one-letter code: UPF0182 protein syc2310_c (955 aa).

The next 9 membrane-spanning stretches (helical) occupy residues 12-32 (IAAI…TLWF), 45-65 (LAVQ…LIGG), 85-105 (LQLG…LALT), 141-161 (GSWP…LFLW), 163-183 (PWPL…LLTS), 224-244 (FDLW…YYLA), 263-283 (HLVR…WLAQ), 306-326 (LPLL…LFWQ), and 343-363 (AAIA…QLVV).

The protein belongs to the UPF0182 family.

Its subcellular location is the cell membrane. The protein is UPF0182 protein syc2310_c of Synechococcus sp. (strain ATCC 27144 / PCC 6301 / SAUG 1402/1) (Anacystis nidulans).